The primary structure comprises 430 residues: MTQTSHALFHMAQQCIPGGVNSPVRAFRGVGGDPIFIDHAEGPFFWDVEGKRYLDYVGSWGPMIHGHGHPEVLAAVHAQVNKGLGFGAPTAIEVEMAELVCALVPGIESVRMTSSGTEAVMTAIRLARGYTGRDRIIKFEGNYHGHSDSLLVKAGSGALTLGQPSSAGVPREVSQNTLVLPYNDLPAVVEMMAQFGFDVATIIVEPVAGNMGCVPPEPGFLEGLRAVCDQYGCVLIFDEVMTGFRVALGGAQALYGVRPDLTTLGKIIGGGLPVGAVGGPREIMEYLAPTGPVYQAGTLSGNPVAMAAGLATLRLLTVPGFHERLAAQTAVLCEGLAERAEAAGVPMQINHVPGMFGWFFAEQPVRGFDTVMAADSKRYARFFHGLLARGVYLAPSAYEAGFLSAAHGDTEIAATLDAAEAVLATLKEDA.

K266 is subject to N6-(pyridoxal phosphate)lysine.

It belongs to the class-III pyridoxal-phosphate-dependent aminotransferase family. HemL subfamily. Homodimer. The cofactor is pyridoxal 5'-phosphate.

It is found in the cytoplasm. The enzyme catalyses (S)-4-amino-5-oxopentanoate = 5-aminolevulinate. The protein operates within porphyrin-containing compound metabolism; protoporphyrin-IX biosynthesis; 5-aminolevulinate from L-glutamyl-tRNA(Glu): step 2/2. This chain is Glutamate-1-semialdehyde 2,1-aminomutase, found in Acidithiobacillus ferrooxidans (strain ATCC 23270 / DSM 14882 / CIP 104768 / NCIMB 8455) (Ferrobacillus ferrooxidans (strain ATCC 23270)).